The chain runs to 114 residues: Amphinase-2 (114 aa).

The active-site Proton acceptor is the histidine 15. 4 disulfide bridges follow: cysteine 26/cysteine 79, cysteine 41/cysteine 85, cysteine 59/cysteine 100, and cysteine 97/cysteine 114. The N-linked (GlcNAc...) asparagine glycan is linked to asparagine 27. 42 to 46 contributes to the substrate binding site; it reads KPINT. 2 N-linked (GlcNAc...) asparagine glycosylation sites follow: asparagine 67 and asparagine 91. The active-site Proton donor is the histidine 107.

It belongs to the pancreatic ribonuclease family. As to quaternary structure, monomer. In terms of processing, there are at least four different forms arising from glycan heterogeneity.

The protein resides in the secreted. Functionally, endonuclease, hydrolyzes highly polymerized RNA, poly(U) and poly(C), and the dinucleotides CpA and UpA. Hydrolyzes 18S and 28S ribosomal RNA. More active towards rCA than rUA or rUG. Has cytotoxic activity against cultured human submaxillary gland carcinoma cells. The sequence is that of Amphinase-2 from Lithobates pipiens (Northern leopard frog).